We begin with the raw amino-acid sequence, 509 residues long: Bifunctional purine biosynthesis protein PurH (509 aa).

Positions 1 to 144 constitute an MGS-like domain; sequence MKRALISVSD…KNYAAVTVVV (144 aa).

It belongs to the PurH family.

The catalysed reaction is (6R)-10-formyltetrahydrofolate + 5-amino-1-(5-phospho-beta-D-ribosyl)imidazole-4-carboxamide = 5-formamido-1-(5-phospho-D-ribosyl)imidazole-4-carboxamide + (6S)-5,6,7,8-tetrahydrofolate. It catalyses the reaction IMP + H2O = 5-formamido-1-(5-phospho-D-ribosyl)imidazole-4-carboxamide. It participates in purine metabolism; IMP biosynthesis via de novo pathway; 5-formamido-1-(5-phospho-D-ribosyl)imidazole-4-carboxamide from 5-amino-1-(5-phospho-D-ribosyl)imidazole-4-carboxamide (10-formyl THF route): step 1/1. It functions in the pathway purine metabolism; IMP biosynthesis via de novo pathway; IMP from 5-formamido-1-(5-phospho-D-ribosyl)imidazole-4-carboxamide: step 1/1. The sequence is that of Bifunctional purine biosynthesis protein PurH from Listeria welshimeri serovar 6b (strain ATCC 35897 / DSM 20650 / CCUG 15529 / CIP 8149 / NCTC 11857 / SLCC 5334 / V8).